Reading from the N-terminus, the 429-residue chain is Aspartate--tRNA(Asp/Asn) ligase (429 aa).

Position 166 (E166) interacts with L-aspartate. Residues 188–191 (QLYK) form an aspartate region. R210 lines the L-aspartate pocket. ATP is bound by residues 210–212 (RAE), 218–220 (RHL), and E352. E352 and S355 together coordinate Mg(2+). L-aspartate contacts are provided by S355 and R359. 400-403 (GIER) lines the ATP pocket.

It belongs to the class-II aminoacyl-tRNA synthetase family. Type 2 subfamily. In terms of assembly, homodimer. The cofactor is Mg(2+).

It localises to the cytoplasm. The enzyme catalyses tRNA(Asx) + L-aspartate + ATP = L-aspartyl-tRNA(Asx) + AMP + diphosphate. Its function is as follows. Aspartyl-tRNA synthetase with relaxed tRNA specificity since it is able to aspartylate not only its cognate tRNA(Asp) but also tRNA(Asn). Reaction proceeds in two steps: L-aspartate is first activated by ATP to form Asp-AMP and then transferred to the acceptor end of tRNA(Asp/Asn). The chain is Aspartate--tRNA(Asp/Asn) ligase from Methanoculleus marisnigri (strain ATCC 35101 / DSM 1498 / JR1).